Reading from the N-terminus, the 886-residue chain is DNA double-strand break repair Rad50 ATPase (886 aa).

ATP is bound by residues R13, N33–S39, and Q128. Coiled-coil stretches lie at residues E183–T360 and K400–A433. Residues L392 to E489 enclose the Zinc-hook domain. Residues C437 and C440 each contribute to the Zn(2+) site. Coiled-coil stretches lie at residues E489 to K518 and S545 to E713. F792–E797 lines the ATP pocket.

The protein belongs to the SMC family. RAD50 subfamily. As to quaternary structure, homodimer. Forms a heterotetramer composed of two Mre11 subunits and two Rad50 subunits. Requires Zn(2+) as cofactor.

Functionally, part of the Rad50/Mre11 complex, which is involved in the early steps of DNA double-strand break (DSB) repair. The complex may facilitate opening of the processed DNA ends to aid in the recruitment of HerA and NurA. Rad50 controls the balance between DNA end bridging and DNA resection via ATP-dependent structural rearrangements of the Rad50/Mre11 complex. This Archaeoglobus fulgidus (strain ATCC 49558 / DSM 4304 / JCM 9628 / NBRC 100126 / VC-16) protein is DNA double-strand break repair Rad50 ATPase.